The sequence spans 185 residues: Ribose 1,5-bisphosphate phosphokinase PhnN (185 aa).

Glycine 10–aspartate 17 is a binding site for ATP.

This sequence belongs to the ribose 1,5-bisphosphokinase family.

The enzyme catalyses alpha-D-ribose 1,5-bisphosphate + ATP = 5-phospho-alpha-D-ribose 1-diphosphate + ADP. It functions in the pathway metabolic intermediate biosynthesis; 5-phospho-alpha-D-ribose 1-diphosphate biosynthesis; 5-phospho-alpha-D-ribose 1-diphosphate from D-ribose 5-phosphate (route II): step 3/3. Catalyzes the phosphorylation of ribose 1,5-bisphosphate to 5-phospho-D-ribosyl alpha-1-diphosphate (PRPP). The chain is Ribose 1,5-bisphosphate phosphokinase PhnN from Shigella dysenteriae serotype 1 (strain Sd197).